Here is a 329-residue protein sequence, read N- to C-terminus: MSAAAHRTPKSGRQSLLFQDLASPVSARRGKFSSPGQAAAVSALWRENFGGSDLPPPPMYTLDDRSDFSPESGIADYSASPDAKSDRRTPFQSSGKNIVTPGKGKLEASPSFSLLNAQQSQQVSGSPSWWSQSKAGSSTEQDDKGKGSPVEGVVQPGALVTLPPPREVARPEVQRQIIPTGNLDEEEWVTVYGFSPGDTNLVLREFEKCGMVLKHVPGPRNANWMHILYQNRSDAHKALNKAGMMINGVVIVGVKPVDPIQKQALNERLNNQGFMPLPPPSSTRNTARPLSRPQYLQNGSAFSPQPSGGAMASPSKSMVSKFFDLMFGV.

2 disordered regions span residues 48–105 and 123–167; these read NFGG…GKGK and VSGS…PPRE. The segment covering 123–139 has biased composition (polar residues); sequence VSGSPSWWSQSKAGSST. Positions 183 to 264 constitute an RRM Nup35-type domain; sequence LDEEEWVTVY…KPVDPIQKQA (82 aa). The interval 271–315 is disordered; that stretch reads NQGFMPLPPPSSTRNTARPLSRPQYLQNGSAFSPQPSGGAMASPS. A compositionally biased stretch (polar residues) spans 282-306; the sequence is STRNTARPLSRPQYLQNGSAFSPQP.

The protein belongs to the Nup35 family. Part of the nuclear pore complex (NPC). The NPC has an eight-fold symmetrical structure comprising a central transport channel and two rings, the cytoplasmic and nuclear rings, to which eight filaments are attached. The cytoplasmic filaments have loose ends, while the nuclear filaments are joined in a distal ring, forming a nuclear basket. NPCs are highly dynamic in configuration and composition, and can be devided in 3 subcomplexes, the NUP62 subcomplex, the NUP107-160 subcomplex and the NUP93 subcomplex, containing approximately 30 different nucleoporin proteins.

The protein localises to the nucleus. It localises to the nuclear pore complex. This Arabidopsis thaliana (Mouse-ear cress) protein is Nuclear pore complex protein NUP35.